The following is a 103-amino-acid chain: MAKKSLIQREKKRQKLEQKYHLIRRSSKKKIRSKVSPLSLSEKTKMQEKLQSLPRNSAPTRLHRRCFLTGRPRANYRDFGLSGHILREMVYACLLPGATRSSW.

Positions 27-56 (SKKKIRSKVSPLSLSEKTKMQEKLQSLPRN) are disordered.

This sequence belongs to the universal ribosomal protein uS14 family. Part of the 30S ribosomal subunit.

It is found in the plastid. It localises to the chloroplast. Its function is as follows. Binds 16S rRNA, required for the assembly of 30S particles. The sequence is that of Small ribosomal subunit protein uS14c from Zea mays (Maize).